Here is a 200-residue protein sequence, read N- to C-terminus: Glutathione S-transferase domain-containing protein DDB_G0273153/DDB_G0273923 (200 aa).

Positions 1 to 71 (MISSIYIFKI…YISNNHNFSG (71 aa)) constitute a GST N-terminal domain. The GST C-terminal domain maps to 73 to 195 (SLQESARVDD…INSNNINSQS (123 aa)).

It belongs to the GST superfamily.

This is Glutathione S-transferase domain-containing protein DDB_G0273153/DDB_G0273923 from Dictyostelium discoideum (Social amoeba).